The chain runs to 518 residues: 2-isopropylmalate synthase (518 aa).

The region spanning 5–267 (VIIFDTTLRD…STNIKHKEIY (263 aa)) is the Pyruvate carboxyltransferase domain. Mn(2+) contacts are provided by D14, H202, H204, and N238. The regulatory domain stretch occupies residues 392–518 (SLSFFSVQSI…KLKTLKKVNN (127 aa)).

This sequence belongs to the alpha-IPM synthase/homocitrate synthase family. LeuA type 1 subfamily. Homodimer. It depends on Mn(2+) as a cofactor.

The protein resides in the cytoplasm. The catalysed reaction is 3-methyl-2-oxobutanoate + acetyl-CoA + H2O = (2S)-2-isopropylmalate + CoA + H(+). It participates in amino-acid biosynthesis; L-leucine biosynthesis; L-leucine from 3-methyl-2-oxobutanoate: step 1/4. In terms of biological role, catalyzes the condensation of the acetyl group of acetyl-CoA with 3-methyl-2-oxobutanoate (2-ketoisovalerate) to form 3-carboxy-3-hydroxy-4-methylpentanoate (2-isopropylmalate). This is 2-isopropylmalate synthase from Buchnera aphidicola subsp. Schizaphis graminum (strain Sg).